We begin with the raw amino-acid sequence, 324 residues long: MDNIMQSSMPPGFRFHPTEEELVGYYLDRKINSMKSALDVIVEIDLYKMEPWDIQARCKLGYEEQNEWYFFSHKDRKYPTGTRTNRATAAGFWKATGRDKAVLSKNSVIGMRKTLVYYKGRAPNGRKSDWIMHEYRLQNSELAPVQEEGWVVCRAFRKPIPNQRPLGYEPWQNQLYHVESSNNYSSSVTMNTSHHIGASSSSHNLNQMLMSNNHYNPNNTSSSMHQYGNIELPQLDSPSLSPSLGTNKDQNESFEQEEEKSFNCVDWRTLDTLLETQVIHPHNPNILMFETQSYNPAPSFPSMHQSYNEVEANIHHSLGCFPDS.

Residues 9 to 158 form the NAC domain; that stretch reads MPPGFRFHPT…GWVVCRAFRK (150 aa). The DNA-binding element occupies 109 to 164; the sequence is IGMRKTLVYYKGRAPNGRKSDWIMHEYRLQNSELAPVQEEGWVVCRAFRKPIPNQR. The span at 232–244 shows a compositional bias: low complexity; sequence LPQLDSPSLSPSL. Residues 232–259 form a disordered region; it reads LPQLDSPSLSPSLGTNKDQNESFEQEEE.

The protein belongs to the plant vascular related NAC-domain protein family. Forms homodimer and heterodimers with other VND proteins (e.g. NAC037/VND1, NAC076/VND2 and NAC105/VND3) via their N-termini. Interacts with NAC083/VNI2. Expressed in developing protoxylems in roots and shoots. Detected in root protoxylem poles and in vessels of protoxylems, outermost metaxylems, inner metaxylems, shoots and hypocotyls. Expressed in roots, hypocotyls, cotyledons and leaves. Accumulates in the xylem but not in interfascicular fibers or pith cells in inflorescence stems. Present in developing vessels of the secondary xylem in roots undergoing secondary growth.

The protein localises to the nucleus. Its function is as follows. Transcription activator that binds to the secondary wall NAC binding element (SNBE), 5'-(T/A)NN(C/T)(T/C/G)TNNNNNNNA(A/C)GN(A/C/T)(A/T)-3', in the promoter of target genes (e.g. genes involved in secondary wall biosynthesis, cell wall modification such as xylan accumulation, and programmed cell death). Involved in xylem formation in roots and shoots, especially regulating protoxylem vessel differentiation by promoting immature xylem vessel-specific genes expression. Can activate the expression of several genes including XCP1, MYB46, NAC010/SND3, MYB103, MYB58, MYB63, MYB83, KNAT7, ASL19 and ASL20. Functionally, required for the soilborne fungal pathogen Verticillium longisporum-induced transdifferentiation of chloroplast-containing bundle sheath cells to functional xylem elements leading to stunted growth, vein clearing, and leaf chloroses, as well as xylem hyperplasia within the vasculature of leaves, hypocotyls, and roots due to reinitiation of cambial activity and transdifferentiation of xylem parenchyma cells. This developmental reprogramming also mediates an increased drought stress tolerance. The polypeptide is NAC domain-containing protein 30 (Arabidopsis thaliana (Mouse-ear cress)).